A 647-amino-acid chain; its full sequence is Beta-glucosidase-like SFR2, chloroplastic (647 aa).

The segment at 116 to 140 (SAAGDGGSQQSWRSTGGENIGDREQ) is disordered. Over residues 123 to 132 (SQQSWRSTGG) the composition is skewed to polar residues. Asparagine 169 carries an N-linked (GlcNAc...) asparagine glycan. A beta-D-glucoside-binding positions include histidine 258, 302–303 (NE), tyrosine 414, glutamate 466, tryptophan 504, 511–512 (EW), and phenylalanine 520. Residue glutamate 303 is the Proton donor of the active site. Glutamate 466 functions as the Nucleophile in the catalytic mechanism.

It belongs to the glycosyl hydrolase 1 family.

It localises to the plastid. The protein resides in the chloroplast outer membrane. It carries out the reaction 2 a 1,2-diacyl-3-O-(beta-D-galactosyl)-sn-glycerol = a 1,2-diacyl-3-O-[beta-D-galactosyl-(1-&gt;6)-beta-D-galactosyl]-sn-glycerol + a 1,2-diacyl-sn-glycerol. Galactosyltransferase synthesizing digalactosyldiacylglycerol from monogalactosyldiacylglycerol in the absence of UDP-galactose. Potentially involved in freezing tolerance. In Oryza sativa subsp. japonica (Rice), this protein is Beta-glucosidase-like SFR2, chloroplastic.